The sequence spans 501 residues: LIM domain-containing protein HDR3 (501 aa).

Residues 33–67 (GEANRRRPRVTAGEETTLWEEPVRPKKEEPPRHNN) form a disordered region. Basic and acidic residues predominate over residues 53 to 67 (EPVRPKKEEPPRHNN). UIM domains are found at residues 65 to 84 (HNNE…DAKN) and 94 to 113 (ENDE…NPYQ). The LIM zinc-binding domain occupies 131–191 (RVCGGCKHEI…KLCYKELHHP (61 aa)). Residues 429-448 (YASSSSSSCRPPPSKKGGIS) are disordered.

In terms of assembly, interacts (via N-terminus) with GW6A (via C-terminus).

Ubiquitin receptor that functions as a positive regulator of grain size and weight. Functions in the same genetic pathway as GW6A to regulate grain size. Modulates grain size in a similar manner to GW6A, by altering cell proliferation in spikelet hulls. Interacts with and enhances the ubiquitination of GW6A. This stabilizes GW6A, delays protein degradation by the 26S proteasome and enhances GW6A histone acetyltransferase activity. The protein is LIM domain-containing protein HDR3 of Oryza sativa subsp. japonica (Rice).